The following is a 943-amino-acid chain: Protein translocase subunit SecA (943 aa).

Residues Q90, 108–112 (GEGKT), and D509 each bind ATP. The disordered stretch occupies residues 537–556 (NEHKPPIPKQRSSKSKGGFS).

This sequence belongs to the SecA family. Monomer and homodimer. Part of the essential Sec protein translocation apparatus which comprises SecA, SecYEG and auxiliary proteins SecDF. Other proteins may also be involved.

Its subcellular location is the cell inner membrane. It is found in the cellular thylakoid membrane. The protein localises to the cytoplasm. It carries out the reaction ATP + H2O + cellular proteinSide 1 = ADP + phosphate + cellular proteinSide 2.. In terms of biological role, part of the Sec protein translocase complex. Interacts with the SecYEG preprotein conducting channel. Has a central role in coupling the hydrolysis of ATP to the transfer of proteins into and across the cell membrane, serving as an ATP-driven molecular motor driving the stepwise translocation of polypeptide chains across the membrane. Probably participates in protein translocation into and across both the cytoplasmic and thylakoid membranes in cyanobacterial cells. This Prochlorococcus marinus (strain MIT 9301) protein is Protein translocase subunit SecA.